We begin with the raw amino-acid sequence, 237 residues long: Peptidase E (237 aa).

Active-site charge relay system residues include S122, D137, and H159.

It belongs to the peptidase S51 family.

The protein localises to the cytoplasm. The catalysed reaction is Dipeptidase E catalyzes the hydrolysis of dipeptides Asp-|-Xaa. It does not act on peptides with N-terminal Glu, Asn or Gln, nor does it cleave isoaspartyl peptides.. Functionally, hydrolyzes dipeptides containing N-terminal aspartate residues. May play a role in allowing the cell to use peptide aspartate to spare carbon otherwise required for the synthesis of the aspartate family of amino acids. This is Peptidase E from Shewanella baltica (strain OS155 / ATCC BAA-1091).